We begin with the raw amino-acid sequence, 362 residues long: Probable branched-chain-amino-acid aminotransferase (362 aa).

N6-(pyridoxal phosphate)lysine is present on lysine 202.

This sequence belongs to the class-IV pyridoxal-phosphate-dependent aminotransferase family. Pyridoxal 5'-phosphate serves as cofactor.

It catalyses the reaction L-leucine + 2-oxoglutarate = 4-methyl-2-oxopentanoate + L-glutamate. The enzyme catalyses L-isoleucine + 2-oxoglutarate = (S)-3-methyl-2-oxopentanoate + L-glutamate. The catalysed reaction is L-valine + 2-oxoglutarate = 3-methyl-2-oxobutanoate + L-glutamate. The protein operates within amino-acid biosynthesis; L-isoleucine biosynthesis; L-isoleucine from 2-oxobutanoate: step 4/4. It functions in the pathway amino-acid biosynthesis; L-leucine biosynthesis; L-leucine from 3-methyl-2-oxobutanoate: step 4/4. Its pathway is amino-acid biosynthesis; L-valine biosynthesis; L-valine from pyruvate: step 4/4. In terms of biological role, acts on leucine, isoleucine and valine. This is Probable branched-chain-amino-acid aminotransferase (ilvE) from Streptomyces coelicolor (strain ATCC BAA-471 / A3(2) / M145).